The sequence spans 560 residues: Membrane protein insertase YidC (560 aa).

The chain crosses the membrane as a helical span at residues 1–21; it reads MDIKRTILIAALAIVSYVMVL. Residues 42 to 66 form a disordered region; the sequence is VAPGLPDGVPAANNGASADVPSANA. 5 helical membrane passes run 341 to 361, 367 to 387, 437 to 457, 468 to 488, and 515 to 535; these read LELT…FWLL, LLGN…GLFF, LGGC…YWVL, WMLW…PIIM, and PIIF…YWVV.

It belongs to the OXA1/ALB3/YidC family. Type 1 subfamily. Interacts with the Sec translocase complex via SecD. Specifically interacts with transmembrane segments of nascent integral membrane proteins during membrane integration.

The protein resides in the cell inner membrane. Its function is as follows. Required for the insertion and/or proper folding and/or complex formation of integral membrane proteins into the membrane. Involved in integration of membrane proteins that insert both dependently and independently of the Sec translocase complex, as well as at least some lipoproteins. Aids folding of multispanning membrane proteins. This is Membrane protein insertase YidC from Pseudomonas putida (strain W619).